We begin with the raw amino-acid sequence, 298 residues long: Acetyl-coenzyme A carboxylase carboxyl transferase subunit beta (298 aa).

A disordered region spans residues 1–21; sequence MNQEVKSGKVLSPSTPWTQRP. A C4-type zinc finger spans residues 20-67; sequence RPVPGIEVADEQQTLKATFTEPTIECPECHALVTRTAISFNAYVCPQC. The CoA carboxyltransferase N-terminal domain occupies 41-298; that stretch reads PTIECPECHA…RLVSKLMNLP (258 aa). 4 residues coordinate Zn(2+): Cys-45, Cys-48, Cys-64, and Cys-67.

This sequence belongs to the AccD/PCCB family. In terms of assembly, acetyl-CoA carboxylase is a heterohexamer composed of biotin carboxyl carrier protein (AccB), biotin carboxylase (AccC) and two subunits each of ACCase subunit alpha (AccA) and ACCase subunit beta (AccD). It depends on Zn(2+) as a cofactor.

Its subcellular location is the cytoplasm. The enzyme catalyses N(6)-carboxybiotinyl-L-lysyl-[protein] + acetyl-CoA = N(6)-biotinyl-L-lysyl-[protein] + malonyl-CoA. It functions in the pathway lipid metabolism; malonyl-CoA biosynthesis; malonyl-CoA from acetyl-CoA: step 1/1. Functionally, component of the acetyl coenzyme A carboxylase (ACC) complex. Biotin carboxylase (BC) catalyzes the carboxylation of biotin on its carrier protein (BCCP) and then the CO(2) group is transferred by the transcarboxylase to acetyl-CoA to form malonyl-CoA. The polypeptide is Acetyl-coenzyme A carboxylase carboxyl transferase subunit beta (Acinetobacter baumannii (strain SDF)).